The sequence spans 259 residues: Phosphatidylserine decarboxylase proenzyme (259 aa).

Residues Asp-86, His-142, and Ser-226 each act as charge relay system; for autoendoproteolytic cleavage activity in the active site. Ser-226 serves as the catalytic Schiff-base intermediate with substrate; via pyruvic acid; for decarboxylase activity. Ser-226 is modified (pyruvic acid (Ser); by autocatalysis).

Belongs to the phosphatidylserine decarboxylase family. PSD-B subfamily. Prokaryotic type I sub-subfamily. In terms of assembly, heterodimer of a large membrane-associated beta subunit and a small pyruvoyl-containing alpha subunit. The cofactor is pyruvate. In terms of processing, is synthesized initially as an inactive proenzyme. Formation of the active enzyme involves a self-maturation process in which the active site pyruvoyl group is generated from an internal serine residue via an autocatalytic post-translational modification. Two non-identical subunits are generated from the proenzyme in this reaction, and the pyruvate is formed at the N-terminus of the alpha chain, which is derived from the carboxyl end of the proenzyme. The autoendoproteolytic cleavage occurs by a canonical serine protease mechanism, in which the side chain hydroxyl group of the serine supplies its oxygen atom to form the C-terminus of the beta chain, while the remainder of the serine residue undergoes an oxidative deamination to produce ammonia and the pyruvoyl prosthetic group on the alpha chain. During this reaction, the Ser that is part of the protease active site of the proenzyme becomes the pyruvoyl prosthetic group, which constitutes an essential element of the active site of the mature decarboxylase.

Its subcellular location is the cell membrane. It catalyses the reaction a 1,2-diacyl-sn-glycero-3-phospho-L-serine + H(+) = a 1,2-diacyl-sn-glycero-3-phosphoethanolamine + CO2. Its pathway is phospholipid metabolism; phosphatidylethanolamine biosynthesis; phosphatidylethanolamine from CDP-diacylglycerol: step 2/2. Catalyzes the formation of phosphatidylethanolamine (PtdEtn) from phosphatidylserine (PtdSer). The sequence is that of Phosphatidylserine decarboxylase proenzyme from Halalkalibacterium halodurans (strain ATCC BAA-125 / DSM 18197 / FERM 7344 / JCM 9153 / C-125) (Bacillus halodurans).